Here is a 57-residue protein sequence, read N- to C-terminus: Probable antitoxin MazE1 (57 aa).

As to quaternary structure, forms a complex with cognate toxin MazF1.

Functionally, antitoxin component of a type II toxin-antitoxin (TA) system. This chain is Probable antitoxin MazE1 (mazE1), found in Mycobacterium tuberculosis (strain ATCC 25618 / H37Rv).